Reading from the N-terminus, the 216-residue chain is Protein-L-isoaspartate O-methyltransferase (216 aa).

The active site involves Ser66.

This sequence belongs to the methyltransferase superfamily. L-isoaspartyl/D-aspartyl protein methyltransferase family.

The protein localises to the cytoplasm. It carries out the reaction [protein]-L-isoaspartate + S-adenosyl-L-methionine = [protein]-L-isoaspartate alpha-methyl ester + S-adenosyl-L-homocysteine. In terms of biological role, catalyzes the methyl esterification of L-isoaspartyl residues in peptides and proteins that result from spontaneous decomposition of normal L-aspartyl and L-asparaginyl residues. It plays a role in the repair and/or degradation of damaged proteins. The protein is Protein-L-isoaspartate O-methyltransferase of Dechloromonas aromatica (strain RCB).